A 679-amino-acid polypeptide reads, in one-letter code: Methionine--tRNA ligase (679 aa).

The 'HIGH' region signature appears at proline 12 to histidine 22. The Zn(2+) site is built by cysteine 143, cysteine 146, cysteine 156, and cysteine 159. Positions lysine 328–serine 332 match the 'KMSKS' region motif. Residue lysine 331 participates in ATP binding. The region spanning aspartate 577–lysine 679 is the tRNA-binding domain.

This sequence belongs to the class-I aminoacyl-tRNA synthetase family. MetG type 1 subfamily. Homodimer. Zn(2+) is required as a cofactor.

The protein resides in the cytoplasm. It carries out the reaction tRNA(Met) + L-methionine + ATP = L-methionyl-tRNA(Met) + AMP + diphosphate. In terms of biological role, is required not only for elongation of protein synthesis but also for the initiation of all mRNA translation through initiator tRNA(fMet) aminoacylation. The polypeptide is Methionine--tRNA ligase (Actinobacillus pleuropneumoniae serotype 5b (strain L20)).